Here is a 334-residue protein sequence, read N- to C-terminus: Cobalt-precorrin-5B C(1)-methyltransferase (334 aa).

The protein belongs to the CbiD family.

It carries out the reaction Co-precorrin-5B + S-adenosyl-L-methionine = Co-precorrin-6A + S-adenosyl-L-homocysteine. It functions in the pathway cofactor biosynthesis; adenosylcobalamin biosynthesis; cob(II)yrinate a,c-diamide from sirohydrochlorin (anaerobic route): step 6/10. Its function is as follows. Catalyzes the methylation of C-1 in cobalt-precorrin-5B to form cobalt-precorrin-6A. This chain is Cobalt-precorrin-5B C(1)-methyltransferase, found in Methanoregula boonei (strain DSM 21154 / JCM 14090 / 6A8).